The sequence spans 261 residues: Glucosamine-6-phosphate deaminase (261 aa).

Residue D67 is the Proton acceptor; for enolization step of the active site. The For ring-opening step role is filled by N135. The Proton acceptor; for ring-opening step role is filled by H137. E142 functions as the For ring-opening step in the catalytic mechanism.

It belongs to the glucosamine/galactosamine-6-phosphate isomerase family. NagB subfamily. In terms of assembly, homohexamer.

It catalyses the reaction alpha-D-glucosamine 6-phosphate + H2O = beta-D-fructose 6-phosphate + NH4(+). It functions in the pathway amino-sugar metabolism; N-acetylneuraminate degradation; D-fructose 6-phosphate from N-acetylneuraminate: step 5/5. Catalyzes the reversible isomerization-deamination of glucosamine 6-phosphate (GlcN6P) to form fructose 6-phosphate (Fru6P) and ammonium ion. This is Glucosamine-6-phosphate deaminase from Hahella chejuensis (strain KCTC 2396).